Here is a 445-residue protein sequence, read N- to C-terminus: Probable histidine--tRNA ligase, cytoplasmic (445 aa).

It belongs to the class-II aminoacyl-tRNA synthetase family.

The protein localises to the cytoplasm. It carries out the reaction tRNA(His) + L-histidine + ATP = L-histidyl-tRNA(His) + AMP + diphosphate + H(+). This Antonospora locustae (Microsporidian parasite) protein is Probable histidine--tRNA ligase, cytoplasmic.